Here is a 374-residue protein sequence, read N- to C-terminus: Carbamoyl phosphate synthase small chain (374 aa).

The CPSase stretch occupies residues 1-186; it reads MTEHAILVLE…DRNECKRAAP (186 aa). 3 residues coordinate L-glutamine: serine 47, glycine 237, and glycine 239. In terms of domain architecture, Glutamine amidotransferase type-1 spans 189-374; it reads KVVAYDYGVK…RFITMMAAQS (186 aa). Cysteine 265 acts as the Nucleophile in catalysis. Positions 266, 269, 307, 309, and 310 each coordinate L-glutamine. Active-site residues include histidine 349 and glutamate 351.

It belongs to the CarA family. Composed of two chains; the small (or glutamine) chain promotes the hydrolysis of glutamine to ammonia, which is used by the large (or ammonia) chain to synthesize carbamoyl phosphate. Tetramer of heterodimers (alpha,beta)4.

The catalysed reaction is hydrogencarbonate + L-glutamine + 2 ATP + H2O = carbamoyl phosphate + L-glutamate + 2 ADP + phosphate + 2 H(+). It carries out the reaction L-glutamine + H2O = L-glutamate + NH4(+). It functions in the pathway amino-acid biosynthesis; L-arginine biosynthesis; carbamoyl phosphate from bicarbonate: step 1/1. It participates in pyrimidine metabolism; UMP biosynthesis via de novo pathway; (S)-dihydroorotate from bicarbonate: step 1/3. Functionally, small subunit of the glutamine-dependent carbamoyl phosphate synthetase (CPSase). CPSase catalyzes the formation of carbamoyl phosphate from the ammonia moiety of glutamine, carbonate, and phosphate donated by ATP, constituting the first step of 2 biosynthetic pathways, one leading to arginine and/or urea and the other to pyrimidine nucleotides. The small subunit (glutamine amidotransferase) binds and cleaves glutamine to supply the large subunit with the substrate ammonia. The sequence is that of Carbamoyl phosphate synthase small chain from Xylella fastidiosa (strain Temecula1 / ATCC 700964).